We begin with the raw amino-acid sequence, 493 residues long: MPMPQYTMQPQYPVSQPHTLPPLQPHHSQSPAPHSYMGQPPYRPDLSRYPASTHDVYASSAAPIMPHTTVGSLPPSTFLSHHNHQAQAQQSQHYPPPPHNVLPPASSAQTYPQPIAPAPPRDRRPDFNGMPSGAFSYPDGKASPWMNPDPVAAANGAGAYGAKEPPRTQVVGSQGRRGILPSVPGRVAPVTNGVNGTAKNTTIPAKDADGKFPCPHCNKTYLHAKHLKRHLLRHTGDRPYMCVLCKDTFSRSDILKRHFQKCSIRRGNPTGATHLSHPQAHLKRSQAQAAANTAKSLQEEVSSTVPPSNGIAGATFSEGAVNGNGLGAGRPGFTDQQPLGFTMQSVNGLGRGQPDDAYAHGQAHQRASWMATPKQNPYLVQPGTEAPNQQLNVDRPTLEQAKPSVVDPKRPMMPGPDPNHGGGLDWTSMFQAGASDGYINQVFPQSMASGQEPIQAQVETERKFYPTTTTAGPQEGGMNGLYLASTTLGGDGK.

Positions 1–18 (MPMPQYTMQPQYPVSQPH) are enriched in low complexity. Disordered stretches follow at residues 1-50 (MPMP…SRYP), 68-140 (TTVG…YPDG), and 164-202 (EPPR…KNTT). Composition is skewed to polar residues over residues 69–79 (TVGSLPPSTFL) and 192–202 (NGVNGTAKNTT). The segment at 212-234 (FPCPHCNKTYLHAKHLKRHLLRH) adopts a C2H2-type 1 zinc-finger fold. A C2H2-type 2; degenerate zinc finger spans residues 240 to 265 (YMCVLCKDTFSRSDILKRHFQKCSIR). Composition is skewed to polar residues over residues 288-307 (QAAA…TVPP) and 484-493 (ASTTLGGDGK). 2 disordered regions span residues 288-316 (QAAA…GATF) and 468-493 (TTTA…GDGK).

This sequence belongs to the krueppel C2H2-type zinc-finger protein family.

The protein resides in the nucleus. In terms of biological role, transcription factor that acts in coordination with atrR to regulate the expression of the ABC-type multidrug transporter abcG1 and thus plays a role in azole susceptibility. Regulates the expression of genes involved in fermentation. Is able to promote expression from the yeast FLO11 promoter. The polypeptide is C2H2-type transcription factor ffmA (Aspergillus fumigatus (strain CBS 144.89 / FGSC A1163 / CEA10) (Neosartorya fumigata)).